The chain runs to 650 residues: Flap endonuclease 1 (650 aa).

The tract at residues 1–106 is N-domain; that stretch reads MGIKGLTKFI…SELEKRGEKR (106 aa). Asp-34 is a binding site for Mg(2+). Residues Arg-47 and Arg-72 each coordinate DNA. Residues Asp-88, Glu-160, Glu-162, Asp-181, and Asp-183 each coordinate Mg(2+). The interval 124–266 is I-domain; sequence EIKKQSGRTV…KTAYNLIKEY (143 aa). Position 160 (Glu-160) interacts with DNA. Residues Gly-244 and Asp-246 each contribute to the DNA site. Asp-246 provides a ligand contact to Mg(2+). The interaction with PCNA stretch occupies residues 349-357; it reads TQRRLDNFF. A disordered region spans residues 371–592; the sequence is ETKKEQTLPA…NSYNNIKNNN (222 aa). 3 stretches are compositionally biased toward basic and acidic residues: residues 413–469, 478–502, and 511–524; these read MKEE…KKSL, DSDK…EKIN, and DHSR…KDNI. A compositionally biased stretch (low complexity) spans 525-562; the sequence is SDINNNNNNNNNNSSSNNNNISNNHFNSVSSNSTFNSS. Residues 565–581 are compositionally biased toward basic and acidic residues; that stretch reads LKSEDTLKSNSPLKEDS. Residues 582-592 show a composition bias toward low complexity; sequence PNSYNNIKNNN.

It belongs to the XPG/RAD2 endonuclease family. FEN1 subfamily. As to quaternary structure, interacts with PCNA1 and PCNA2. Three molecules of FEN1 bind to one PCNA trimer with each molecule binding to one PCNA monomer. PCNA stimulates the nuclease activity without altering cleavage specificity. Requires Mg(2+) as cofactor. Post-translationally, phosphorylated. Phosphorylation upon DNA damage induces relocalization to the nuclear plasma.

It is found in the nucleus. Its subcellular location is the nucleolus. The protein resides in the nucleoplasm. It localises to the mitochondrion. Its activity is regulated as follows. Inhibited by monovalent metal ions. In terms of biological role, structure-specific nuclease with 5'-flap endonuclease and 5'-3' exonuclease activities involved in DNA replication and repair. During DNA replication, cleaves the 5'-overhanging flap structure that is generated by displacement synthesis when DNA polymerase encounters the 5'-end of a downstream Okazaki fragment. It enters the flap from the 5'-end and then tracks to cleave the flap base, leaving a nick for ligation. Also involved in the long patch base excision repair (LP-BER) pathway, by cleaving within the apurinic/apyrimidinic (AP) site-terminated flap. Acts as a genome stabilization factor that prevents flaps from equilibrating into structures that lead to duplications and deletions. Also possesses 5'-3' exonuclease activity on nicked or gapped double-stranded DNA, and exhibits RNase H activity. Also involved in replication and repair of rDNA and in repairing mitochondrial DNA. The polypeptide is Flap endonuclease 1 (Plasmodium falciparum).